A 305-amino-acid chain; its full sequence is UDP-3-O-acyl-N-acetylglucosamine deacetylase (305 aa).

Zn(2+) contacts are provided by His79, His238, and Asp242. Residue His265 is the Proton donor of the active site.

The protein belongs to the LpxC family. It depends on Zn(2+) as a cofactor.

The enzyme catalyses a UDP-3-O-[(3R)-3-hydroxyacyl]-N-acetyl-alpha-D-glucosamine + H2O = a UDP-3-O-[(3R)-3-hydroxyacyl]-alpha-D-glucosamine + acetate. It participates in glycolipid biosynthesis; lipid IV(A) biosynthesis; lipid IV(A) from (3R)-3-hydroxytetradecanoyl-[acyl-carrier-protein] and UDP-N-acetyl-alpha-D-glucosamine: step 2/6. Its function is as follows. Catalyzes the hydrolysis of UDP-3-O-myristoyl-N-acetylglucosamine to form UDP-3-O-myristoylglucosamine and acetate, the committed step in lipid A biosynthesis. The sequence is that of UDP-3-O-acyl-N-acetylglucosamine deacetylase from Haemophilus influenzae (strain 86-028NP).